A 91-amino-acid chain; its full sequence is UPF0386 protein CC_0226 (91 aa).

It belongs to the UPF0386 family.

This chain is UPF0386 protein CC_0226, found in Caulobacter vibrioides (strain ATCC 19089 / CIP 103742 / CB 15) (Caulobacter crescentus).